A 105-amino-acid polypeptide reads, in one-letter code: Large ribosomal subunit protein uL24 (105 aa).

Belongs to the universal ribosomal protein uL24 family. In terms of assembly, part of the 50S ribosomal subunit.

Its function is as follows. One of two assembly initiator proteins, it binds directly to the 5'-end of the 23S rRNA, where it nucleates assembly of the 50S subunit. One of the proteins that surrounds the polypeptide exit tunnel on the outside of the subunit. The polypeptide is Large ribosomal subunit protein uL24 (Pseudothermotoga lettingae (strain ATCC BAA-301 / DSM 14385 / NBRC 107922 / TMO) (Thermotoga lettingae)).